A 363-amino-acid chain; its full sequence is Galactokinase (363 aa).

Position 16 to 19 (16 to 19 (EHTD)) interacts with substrate. Residues S50 and 103 to 109 (GSGLSSS) each bind ATP. Residues S109 and E141 each coordinate Mg(2+). Residue D153 is the Proton acceptor of the active site. Residue Y205 coordinates substrate.

This sequence belongs to the GHMP kinase family. GalK subfamily.

The protein resides in the cytoplasm. It carries out the reaction alpha-D-galactose + ATP = alpha-D-galactose 1-phosphate + ADP + H(+). It functions in the pathway carbohydrate metabolism; galactose metabolism. Functionally, catalyzes the transfer of the gamma-phosphate of ATP to D-galactose to form alpha-D-galactose-1-phosphate (Gal-1-P). The sequence is that of Galactokinase from Mycobacterium bovis (strain ATCC BAA-935 / AF2122/97).